We begin with the raw amino-acid sequence, 616 residues long: MPKYRSATTTHGRNMAGARALWRATGMTDDDFGKPIIAVVNSFTQFVPGHVHLRDLGKLVAEQIEASGGVAKEFNTIAVDDGIAMGHGGMLYSLPSRELIADSVEYMVNAHCADAMVCISNCDKITPGMLMASLRLNIPVIFVSGGPMEAGKTKLSNQIIKLDLIDAMIQGANPNVSDADSEQIERSACPTCGSCSGMFTANSMNCLTEALGLSQPANGSLLATHADRRDLFLNAGTRIVGLAKRYYEQDDASVLPRNIANKAAFENAMILDIAMGGSTNTVLHLLAAAQEGEIDFTMSDIDRLSRKVPHLCKVAPSGQKYHMEDVHRAGGVIGILGELDRAGLLNREVNNVLGKTLPETLEAYDVMLTKDESVKRMYSAGPAGIRTTKAFSQDCRWDSLDTDRQEGCIRSREYAYSQDGGLAVLYGNIAVDGCIVKTAGVDKESLIFRGPAKVYESQDDAVEAILGGKVVAGDVVVIRYEGPKGGPGMQEMLYPTTYLKSMGLGKSCALITDGRFSGGTSGLSIGHASPEAASGGIIGLVQDGDMIAIDIPSRSIVLDVAENELASRRETELARGDAAWTPHNRERQVSFALRAYAILATSADKGAVRDKSKLGG.

Mg(2+) is bound at residue Asp-81. Residue Cys-122 participates in [2Fe-2S] cluster binding. Mg(2+) contacts are provided by Asp-123 and Lys-124. The residue at position 124 (Lys-124) is an N6-carboxylysine. Cys-195 is a binding site for [2Fe-2S] cluster. Glu-491 serves as a coordination point for Mg(2+). The Proton acceptor role is filled by Ser-517.

It belongs to the IlvD/Edd family. Homodimer. [2Fe-2S] cluster is required as a cofactor. It depends on Mg(2+) as a cofactor.

The catalysed reaction is (2R)-2,3-dihydroxy-3-methylbutanoate = 3-methyl-2-oxobutanoate + H2O. It carries out the reaction (2R,3R)-2,3-dihydroxy-3-methylpentanoate = (S)-3-methyl-2-oxopentanoate + H2O. It participates in amino-acid biosynthesis; L-isoleucine biosynthesis; L-isoleucine from 2-oxobutanoate: step 3/4. The protein operates within amino-acid biosynthesis; L-valine biosynthesis; L-valine from pyruvate: step 3/4. Functions in the biosynthesis of branched-chain amino acids. Catalyzes the dehydration of (2R,3R)-2,3-dihydroxy-3-methylpentanoate (2,3-dihydroxy-3-methylvalerate) into 2-oxo-3-methylpentanoate (2-oxo-3-methylvalerate) and of (2R)-2,3-dihydroxy-3-methylbutanoate (2,3-dihydroxyisovalerate) into 2-oxo-3-methylbutanoate (2-oxoisovalerate), the penultimate precursor to L-isoleucine and L-valine, respectively. This chain is Dihydroxy-acid dehydratase, found in Pectobacterium atrosepticum (strain SCRI 1043 / ATCC BAA-672) (Erwinia carotovora subsp. atroseptica).